We begin with the raw amino-acid sequence, 288 residues long: MQQSTLLKPVSCYGIGVHSGKRTQLTIEPAKENTGIIFIRTDISSENNYIEASYFNVSDTLLSTTISNDHKVQISTIEHLMAALWGCSIDNAIIKIDGPEVPIMDGSSKPFVFMIECAGKKLQNAPKKYLKILKDIKVVHKDCELYCTPYDHMTVDLTIDFASKAIGRQNLTFSKQESFNQNIADARTFGFTKELDYLQSKGLAQGASFENAIGIDEQDKILNPNGLRYEDEFVRHKLLDLFGDLYTSGTSVVSSIKGYKTSHALNNELLHRIFSDTTSYKFVTNSEL.

Positions 79, 236, and 240 each coordinate Zn(2+). Histidine 263 acts as the Proton donor in catalysis.

The protein belongs to the LpxC family. Zn(2+) is required as a cofactor.

The enzyme catalyses a UDP-3-O-[(3R)-3-hydroxyacyl]-N-acetyl-alpha-D-glucosamine + H2O = a UDP-3-O-[(3R)-3-hydroxyacyl]-alpha-D-glucosamine + acetate. The protein operates within glycolipid biosynthesis; lipid IV(A) biosynthesis; lipid IV(A) from (3R)-3-hydroxytetradecanoyl-[acyl-carrier-protein] and UDP-N-acetyl-alpha-D-glucosamine: step 2/6. Functionally, catalyzes the hydrolysis of UDP-3-O-myristoyl-N-acetylglucosamine to form UDP-3-O-myristoylglucosamine and acetate, the committed step in lipid A biosynthesis. The sequence is that of UDP-3-O-acyl-N-acetylglucosamine deacetylase from Rickettsia felis (strain ATCC VR-1525 / URRWXCal2) (Rickettsia azadi).